The sequence spans 127 residues: Fumarate reductase subunit C (127 aa).

Helical transmembrane passes span 30–50, 67–87, and 107–127; these read ATILPLIFFTICLTFGLGCLV, IVVVLNILALLGSLFHAQTFF, and IIVLAQWAAVAAISLFVLVLV.

It belongs to the FrdC family. As to quaternary structure, part of an enzyme complex containing four subunits: a flavoprotein (FrdA), an iron-sulfur protein (FrdB), and two hydrophobic anchor proteins (FrdC and FrdD).

Its subcellular location is the cell inner membrane. In terms of biological role, anchors the catalytic components of the fumarate reductase complex to the cell membrane, binds quinones. This chain is Fumarate reductase subunit C, found in Photobacterium profundum (strain SS9).